Reading from the N-terminus, the 641-residue chain is MIKINLLNHQSHSFPSKTTPLEIWKNWLKKTLKKPVAALFNQKFIELDYPLTQDGDLEILAESNPKSLFVLNHSTAHLMAQAIQRLYPNALFTIGPAIKEGFYYDIDFQNHSISEKDLPTIEKKMHEVALENHSMIMKKVTHDEAKRLFSYNPYKLILLEKHKEEDITVCHQGEFIDLCRGGHIPKLSLIKHFKLLKISGSYFQGDAKNKSLTRIYGTSFFKKEDLGNYLKLLEERKERDHKRLNKKLDLFMFSQEVGLGLPFWLPKGATLRRIVERYIVDKELSHQYHHVYTPIMANVELYRTSGHLEHYSQNMFPVMQLENKEKIVLRPMNCPHHMMIYKKSPRSYKELPLRIAELGMMHRFEKSGAVSGLQRVREMNLNDAHNFVRPDQIEEEIKKIINLILEVYRDFKITKYEFRLSYRDPQDKEKYFPDDNMWQHAENILKKTIQELNLPFREAIGDAAFYGPKLDVQVLTALGNEETLSTIQLDFLLPQKFDLTFIDANNKHCRPVVIHRAIVSTLERFLSHLIEENKGVFPLWLAPVQILLIPVSSSVNLKYTQEIKELLLSQGLRAEINSKEATLGYKIREAQELKIPYQIVVGDNEIAKNLITFRKYGQKNQTTTNIETFISSLNQEIMEKR.

Residues Met-1–Ala-61 enclose the TGS domain. A catalytic region spans residues Asp-240–Pro-538. The Zn(2+) site is built by Cys-334, His-385, and His-515.

The protein belongs to the class-II aminoacyl-tRNA synthetase family. Homodimer. Zn(2+) is required as a cofactor.

It localises to the cytoplasm. It carries out the reaction tRNA(Thr) + L-threonine + ATP = L-threonyl-tRNA(Thr) + AMP + diphosphate + H(+). Catalyzes the attachment of threonine to tRNA(Thr) in a two-step reaction: L-threonine is first activated by ATP to form Thr-AMP and then transferred to the acceptor end of tRNA(Thr). Also edits incorrectly charged L-seryl-tRNA(Thr). This Phytoplasma australiense protein is Threonine--tRNA ligase.